The primary structure comprises 174 residues: Nucleoside-triphosphatase THEP1 (174 aa).

ATP-binding positions include Gly7–Ser14 and Cys98–Gly105.

The protein belongs to the THEP1 NTPase family.

The enzyme catalyses a ribonucleoside 5'-triphosphate + H2O = a ribonucleoside 5'-diphosphate + phosphate + H(+). Has nucleotide phosphatase activity towards ATP, GTP, CTP, TTP and UTP. May hydrolyze nucleoside diphosphates with lower efficiency. The sequence is that of Nucleoside-triphosphatase THEP1 from Methanothermobacter thermautotrophicus (strain ATCC 29096 / DSM 1053 / JCM 10044 / NBRC 100330 / Delta H) (Methanobacterium thermoautotrophicum).